Reading from the N-terminus, the 123-residue chain is TYMS opposite strand protein (123 aa).

A disordered region spans residues 57 to 111; it reads MRPLPRRIEVRTKRGPQRPAAPERSPQPRLPPSRHPSRRGPRRHLSGCSAPACRI. Over residues 91–101 the composition is skewed to basic residues; the sequence is HPSRRGPRRHL.

The protein is TYMS opposite strand protein (TYMSOS) of Homo sapiens (Human).